Consider the following 368-residue polypeptide: Riboflavin biosynthesis protein RibD (368 aa).

A deaminase region spans residues 1 to 146 (MISDQTHMRR…EAFCFRIKHQ (146 aa)). Residues 2–124 (ISDQTHMRRC…RLRQAGIEVK (123 aa)) form the CMP/dCMP-type deaminase domain. His-51 is a Zn(2+) binding site. The active-site Proton donor is Glu-53. Residues Cys-76 and Cys-85 each coordinate Zn(2+). The segment at 147–368 (RPFGIFKYAM…GNDDNGQSNI (222 aa)) is reductase. Ala-155 serves as a coordination point for NADP(+). Ser-169 serves as a coordination point for substrate. Position 171 (Trp-171) interacts with NADP(+). Residue Arg-185 coordinates substrate. NADP(+) contacts are provided by Thr-197 and Asp-201. Positions 205 and 289 each coordinate substrate. 291 to 297 (GGILAAE) contributes to the NADP(+) binding site.

The protein in the N-terminal section; belongs to the cytidine and deoxycytidylate deaminase family. In the C-terminal section; belongs to the HTP reductase family. Zn(2+) serves as cofactor.

The enzyme catalyses 2,5-diamino-6-hydroxy-4-(5-phosphoribosylamino)-pyrimidine + H2O + H(+) = 5-amino-6-(5-phospho-D-ribosylamino)uracil + NH4(+). It carries out the reaction 5-amino-6-(5-phospho-D-ribitylamino)uracil + NADP(+) = 5-amino-6-(5-phospho-D-ribosylamino)uracil + NADPH + H(+). It participates in cofactor biosynthesis; riboflavin biosynthesis; 5-amino-6-(D-ribitylamino)uracil from GTP: step 2/4. It functions in the pathway cofactor biosynthesis; riboflavin biosynthesis; 5-amino-6-(D-ribitylamino)uracil from GTP: step 3/4. Converts 2,5-diamino-6-(ribosylamino)-4(3h)-pyrimidinone 5'-phosphate into 5-amino-6-(ribosylamino)-2,4(1h,3h)-pyrimidinedione 5'-phosphate. The protein is Riboflavin biosynthesis protein RibD (ribD) of Synechocystis sp. (strain ATCC 27184 / PCC 6803 / Kazusa).